Reading from the N-terminus, the 416-residue chain is S-adenosylmethionine synthase (416 aa).

Residue His14 coordinates ATP. Residue Asp16 coordinates Mg(2+). Glu42 contacts K(+). Residues Glu55 and Gln98 each coordinate L-methionine. The interval 98–108 is flexible loop; sequence QSADINQGVDR. Residues 164 to 166, 240 to 241, Asp249, 255 to 256, Ala272, and Lys276 contribute to the ATP site; these read DAK, KF, and RK. Asp249 contributes to the L-methionine binding site. L-methionine is bound at residue Lys280.

The protein belongs to the AdoMet synthase family. Homotetramer; dimer of dimers. It depends on Mg(2+) as a cofactor. Requires K(+) as cofactor.

The protein resides in the cytoplasm. It carries out the reaction L-methionine + ATP + H2O = S-adenosyl-L-methionine + phosphate + diphosphate. It participates in amino-acid biosynthesis; S-adenosyl-L-methionine biosynthesis; S-adenosyl-L-methionine from L-methionine: step 1/1. Catalyzes the formation of S-adenosylmethionine (AdoMet) from methionine and ATP. The overall synthetic reaction is composed of two sequential steps, AdoMet formation and the subsequent tripolyphosphate hydrolysis which occurs prior to release of AdoMet from the enzyme. In Flavobacterium johnsoniae (strain ATCC 17061 / DSM 2064 / JCM 8514 / BCRC 14874 / CCUG 350202 / NBRC 14942 / NCIMB 11054 / UW101) (Cytophaga johnsonae), this protein is S-adenosylmethionine synthase.